Here is a 663-residue protein sequence, read N- to C-terminus: DNA ligase (663 aa).

NAD(+)-binding positions include 31 to 35 (DYEYD), 80 to 81 (SL), and Glu109. Residue Lys111 is the N6-AMP-lysine intermediate of the active site. Arg132, Glu167, Lys283, and Lys307 together coordinate NAD(+). Residues Cys401, Cys404, Cys419, and Cys424 each coordinate Zn(2+). The BRCT domain maps to 586–663 (KIDNRFLGKT…TEEDLKDMIK (78 aa)).

The protein belongs to the NAD-dependent DNA ligase family. LigA subfamily. It depends on Mg(2+) as a cofactor. Mn(2+) is required as a cofactor.

The enzyme catalyses NAD(+) + (deoxyribonucleotide)n-3'-hydroxyl + 5'-phospho-(deoxyribonucleotide)m = (deoxyribonucleotide)n+m + AMP + beta-nicotinamide D-nucleotide.. Functionally, DNA ligase that catalyzes the formation of phosphodiester linkages between 5'-phosphoryl and 3'-hydroxyl groups in double-stranded DNA using NAD as a coenzyme and as the energy source for the reaction. It is essential for DNA replication and repair of damaged DNA. This Clostridium kluyveri (strain NBRC 12016) protein is DNA ligase.